Here is a 706-residue protein sequence, read N- to C-terminus: Kinesin-like protein KIF2A (706 aa).

The interval 1–217 is globular; the sequence is MATANFGKIQ…LDYRPLTTAD (217 aa). Residues 66–139 form a disordered region; the sequence is LVPDEEIEPS…AQQNGSVSDI (74 aa). The residue at position 75 (S75) is a Phosphoserine. Residues T78 and T97 each carry the phosphothreonine modification. Residue S100 is modified to Phosphoserine. K102 is modified (N6-acetyllysine). Residues 123–139 show a composition bias toward polar residues; it reads FPEQSSSAQQNGSVSDI. Residues S135 and S140 each carry the phosphoserine modification. The disordered stretch occupies residues 165–186; the sequence is KLQEKREKRRLQQQELREKRAQ. One can recognise a Kinesin motor domain in the interval 223–553; sequence RICVCVRKRP…LRYANRVKEL (331 aa). Residue 313–320 participates in ATP binding; it reads GQTGSGKT. Residues D556 and Q573 each carry the phosphoserine modification. The stretch at 660–699 forms a coiled coil; it reads ATQLEAILEQKIDILTELRDKVKSFRAALQEEEQASKQIN.

Belongs to the TRAFAC class myosin-kinesin ATPase superfamily. Kinesin family. MCAK/KIF2 subfamily. As to quaternary structure, interacts with AURKA and PLK1. Interacts with PSRC1. Interacts with MCRS1; the interaction enhances recruitment of KIF2A to the minus ends of spindle microtubules which promotes chromosome alignment.

It is found in the cytoplasm. The protein resides in the cytoskeleton. Its subcellular location is the microtubule organizing center. The protein localises to the centrosome. It localises to the spindle pole. It is found in the spindle. Plus end-directed microtubule-dependent motor required for normal brain development. May regulate microtubule dynamics during axonal growth. Required for normal progression through mitosis. Required for normal congress of chromosomes at the metaphase plate. Required for normal spindle dynamics during mitosis. Promotes spindle turnover. Implicated in formation of bipolar mitotic spindles. Has microtubule depolymerization activity. In Homo sapiens (Human), this protein is Kinesin-like protein KIF2A (KIF2A).